We begin with the raw amino-acid sequence, 553 residues long: Adenine deaminase (553 aa).

The protein belongs to the metallo-dependent hydrolases superfamily. Adenine deaminase family. It depends on Mn(2+) as a cofactor.

It carries out the reaction adenine + H2O + H(+) = hypoxanthine + NH4(+). The polypeptide is Adenine deaminase (Methanosarcina acetivorans (strain ATCC 35395 / DSM 2834 / JCM 12185 / C2A)).